A 361-amino-acid polypeptide reads, in one-letter code: uncharacterized protein (361 aa).

A compositionally biased stretch (basic residues) spans M1–P10. Disordered regions lie at residues M1 to H82 and A94 to S147. 2 stretches are compositionally biased toward basic and acidic residues: residues K44–N57 and F120–L134. The span at Q135–S147 shows a compositional bias: polar residues. A coiled-coil region spans residues N295 to D349.

It localises to the cytoplasm. The protein resides in the nucleus. This is an uncharacterized protein from Schizosaccharomyces pombe (strain 972 / ATCC 24843) (Fission yeast).